Reading from the N-terminus, the 790-residue chain is MKFSHNWLNEYLGDTQDSQNLADTLTLAGLEVDAIEPVVAEKVSGVVVGQIKTINKHPDADKLNVCSVDAGEDELLTIVCGASNIYEGMKAPVAKIGAVLPGNFKIKKSKLRGQESFGMMCSEEELGLAEKADGLMDLPIDAPVGTDINKYLNLDDNIIEVDLTPNRADCLSVYGIAREVSALTKTELKNLEIPEPKVVIDDTKEVNITATDACHAYYGCIIKNVNNKIQTPLWMVEKLRRSGIGSISFFVDVTNYVMLLTGQPMHAFDLDKLEGRINVRYAKNNEELTLLDQTQVKLDCDTLIIADDKKALAIAGVMGGLDSSITDSTTNIFLESAFFVPEKIAGKARKYNLHTDSSHRFERGVDPQLAKKAMKIAIRLINEIAGGEVAPIHGAEDLANLNKQIKINLSIKKLNHVLGTNFDIEYVTEVLKALHMDVATSFDGNCIEVIPPSYRFDLEIPEDLIEEVARIYGYSKLPETMPKYAAAKTNISETYQSLDTLNMRLIDRGYHETINYSFIDPKFDEFFFADRGIAIQNPISQDLSIMRQSLIPGLINTFKANTSRQQNRVRIFEKGACFKLQDNQRIQFDRIAGLAYGELLNINWSNSKKVDFFDVKADVEALCNDLTSLSFEVCNDINWLHLGQSAYILANGNKIGVIGVIHPTVLKNFQIKAKAPIVFELDLDVLIKRQIPNFTKISKYPSVSRDISFLVDKSVLAGDIIKAIKALNINILKDVSIFDIYESQDSDRKSIALNMLFQDNLQTLDDKVIVESIDKVLEALKTKFNIEQRV.

The 110-residue stretch at A40–N149 folds into the tRNA-binding domain. One can recognise a B5 domain in the interval N402–E479. The Mg(2+) site is built by D457, D463, E466, and E467. Residues S698–R789 form the FDX-ACB domain.

This sequence belongs to the phenylalanyl-tRNA synthetase beta subunit family. Type 1 subfamily. Tetramer of two alpha and two beta subunits. Mg(2+) is required as a cofactor.

The protein localises to the cytoplasm. It catalyses the reaction tRNA(Phe) + L-phenylalanine + ATP = L-phenylalanyl-tRNA(Phe) + AMP + diphosphate + H(+). This is Phenylalanine--tRNA ligase beta subunit from Francisella tularensis subsp. tularensis (strain SCHU S4 / Schu 4).